The following is a 223-amino-acid chain: Putative protein phosphatase 2C 63 (223 aa).

A disordered region spans residues 1–22 (MASSQQAVRETGRGRASSSSAG). The PPM-type phosphatase domain occupies 1-212 (MASSQQAVRE…RNFHVHSSHV (212 aa)).

It belongs to the PP2C family.

It carries out the reaction O-phospho-L-seryl-[protein] + H2O = L-seryl-[protein] + phosphate. The enzyme catalyses O-phospho-L-threonyl-[protein] + H2O = L-threonyl-[protein] + phosphate. In Oryza sativa subsp. japonica (Rice), this protein is Putative protein phosphatase 2C 63.